Reading from the N-terminus, the 255-residue chain is Hydroxyacylglutathione hydrolase (255 aa).

Residues His52, His54, Asp56, His57, His109, Asp126, and His166 each contribute to the Zn(2+) site.

Belongs to the metallo-beta-lactamase superfamily. Glyoxalase II family. In terms of assembly, monomer. It depends on Zn(2+) as a cofactor.

It catalyses the reaction an S-(2-hydroxyacyl)glutathione + H2O = a 2-hydroxy carboxylate + glutathione + H(+). Its pathway is secondary metabolite metabolism; methylglyoxal degradation; (R)-lactate from methylglyoxal: step 2/2. In terms of biological role, thiolesterase that catalyzes the hydrolysis of S-D-lactoyl-glutathione to form glutathione and D-lactic acid. This chain is Hydroxyacylglutathione hydrolase, found in Anaeromyxobacter dehalogenans (strain 2CP-C).